We begin with the raw amino-acid sequence, 208 residues long: 3-isopropylmalate dehydratase small subunit 2 (208 aa).

This sequence belongs to the LeuD family. LeuD type 1 subfamily. As to quaternary structure, heterodimer of LeuC and LeuD.

It catalyses the reaction (2R,3S)-3-isopropylmalate = (2S)-2-isopropylmalate. Its pathway is amino-acid biosynthesis; L-leucine biosynthesis; L-leucine from 3-methyl-2-oxobutanoate: step 2/4. In terms of biological role, catalyzes the isomerization between 2-isopropylmalate and 3-isopropylmalate, via the formation of 2-isopropylmaleate. This chain is 3-isopropylmalate dehydratase small subunit 2 (leuD2), found in Salmonella typhimurium (strain LT2 / SGSC1412 / ATCC 700720).